A 369-amino-acid polypeptide reads, in one-letter code: Flagellar P-ring protein (369 aa).

Residues 1–22 (MLNFKHLMAAALLLSTSLGVQA) form the signal peptide.

Belongs to the FlgI family. In terms of assembly, the basal body constitutes a major portion of the flagellar organelle and consists of four rings (L,P,S, and M) mounted on a central rod.

It localises to the periplasm. The protein localises to the bacterial flagellum basal body. Functionally, assembles around the rod to form the L-ring and probably protects the motor/basal body from shearing forces during rotation. The sequence is that of Flagellar P-ring protein from Pseudomonas fluorescens (strain ATCC BAA-477 / NRRL B-23932 / Pf-5).